The following is a 120-amino-acid chain: MQTPPELKYAPSHEWLAPDGTVGISDFAQDQLGDVVYVELPEVGRVVTAGETVAVVESVKTASDIYAPASGTIVAVNEQLSGSPELVNQSPYTDGWLFRLDVTEESGELMDAEAYAAANG.

The region spanning 19 to 101 (DGTVGISDFA…YTDGWLFRLD (83 aa)) is the Lipoyl-binding domain. At lysine 60 the chain carries N6-lipoyllysine.

The protein belongs to the GcvH family. In terms of assembly, the glycine cleavage system is composed of four proteins: P, T, L and H. (R)-lipoate serves as cofactor.

Its function is as follows. The glycine cleavage system catalyzes the degradation of glycine. The H protein shuttles the methylamine group of glycine from the P protein to the T protein. The chain is Glycine cleavage system H protein from Deinococcus geothermalis (strain DSM 11300 / CIP 105573 / AG-3a).